We begin with the raw amino-acid sequence, 1555 residues long: Bromodomain adjacent to zinc finger domain protein 1A (1555 aa).

The interval 1–128 (MPLLHRKPFV…EETVEVIRNN (128 aa)) is required for association with the CHRAC1/POLE3 complex. The tract at residues 1–128 (MPLLHRKPFV…EETVEVIRNN (128 aa)) is required for interaction with the CHRAC1-POLE3 heterodimer. Required for interaction with the CHRAC1-POLE3 heterodimer. A required for interaction with NCOR1 region spans residues 1-133 (MPLLHRKPFV…VIRNNGTRLQ (133 aa)). The 107-residue stretch at 22–128 (EEVFYCKVTN…EETVEVIRNN (107 aa)) folds into the WAC domain. 2 positions are modified to phosphoserine: Ser-270 and Ser-284. The DDT domain occupies 422 to 488 (PEVFGDALMV…LTAIFQAMAE (67 aa)). The stretch at 635-701 (IEDYVDVLRQ…EDEQRNSAAV (67 aa)) forms a coiled coil. Composition is skewed to basic and acidic residues over residues 652 to 664 (LKAE…REAT) and 671 to 696 (RKEE…DEQR). A disordered region spans residues 652–751 (LKAEQHRKER…KRSRRGKVGQ (100 aa)). Residues 668–935 (IRRRKEEKLK…QEKSRICAQL (268 aa)) form an interaction with SMARCA5 region. Positions 668-935 (IRRRKEEKLK…QEKSRICAQL (268 aa)) are required for interaction with SMARCA5 and formation of the CHRAC ISWI chromatin remodeling complex. Acidic residues-rich tracts occupy residues 705–714 (GEEEREDFDT) and 728–737 (PDVVTEDEDD). Thr-732 is subject to Phosphothreonine. Residues 773-798 (SADAEEALRQEQQQKEKELLDKIQSA) are a coiled coil. Disordered stretches follow at residues 843-874 (PSSF…SSLD) and 944-969 (HFSD…CDIS). The span at 864 to 873 (SFLSESTSSL) shows a compositional bias: low complexity. A Glycyl lysine isopeptide (Lys-Gly) (interchain with G-Cter in SUMO2) cross-link involves residue Lys-954. Residues Ser-962 and Ser-963 each carry the phosphoserine modification. A PHD-type zinc finger spans residues 1149-1199 (NARCKICRKKGDAENMVLCDGCDRGHHTYCVRPKLKAVPDGDWFCPECRPK). Residues 1203 to 1429 (RRLSSRQRPS…LNRRSSGRQG (227 aa)) form a disordered region. Residues 1214–1258 (ESDEEMEEGMEDDDDEVDDDDEEGQSEEEEYEVEQDEEDSDDDEA) are compositionally biased toward acidic residues. Residues 1263 to 1277 (KRGRPQVRLPIKTKG) are compositionally biased toward basic residues. Ser-1282 bears the Phosphoserine mark. Polar residues predominate over residues 1297-1313 (SRSQQSTPKNTAKSASK). Residues Ser-1320, Ser-1339, Ser-1352, Ser-1370, Ser-1401, Ser-1412, and Ser-1416 each carry the phosphoserine modification. The span at 1369–1386 (HSPSFTNFRVSTSRSSRQ) shows a compositional bias: polar residues. In terms of domain architecture, Bromo spans 1429–1532 (GGVHELSAFE…AFFHIQAQKL (104 aa)). A Phosphothreonine modification is found at Thr-1546.

Belongs to the WAL family. As to quaternary structure, component of the ACF-1 ISWI chromatin remodeling complex at least composed of SMARCA1 and BAZ1A, which regulates the spacing of histone octamers on the DNA template to facilitate access to DNA. Within the ACF-1 ISWI chromatin remodeling complex interacts with SMARCA1; the interaction is direct. Component of the ACF-5 ISWI chromatin remodeling complex (also called the ACF complex) at least composed of BAZ1A and SMARCA5/SNF2H, which regulates the spacing of histone octamers on the DNA template to facilitate access to DNA. Within the ACF-5 ISWI chromatin remodeling complex interacts with SMARCA5/SNF2H; the interaction is direct. Component of the CHRAC ISWI chromatin remodeling complex at least composed of SMARCA5/SNF2H, BAZ1A/ACF1, CHRAC1 and POLE3; the complex preferentially binds DNA through the CHRAC1-POLE3 heterodimer and possesses ATP-dependent nucleosome-remodeling activity. Within the complex interacts (via N-terminus) with POLE3-CHRAC1 heterodimer; the interaction is direct and is required for the complex to preferentially bind to DNA. Within the complex interacts with SMARCA5/SNF2H; the interaction is direct and promotes the interaction with the POLE3-CHRAC1 heterodimer. Interacts with NCOR1 (via its RD1 domain); the interaction corepresses a number of NCOR1-regulated genes.

Its subcellular location is the nucleus. Regulatory subunit of the ATP-dependent ACF-1 and ACF-5 ISWI chromatin remodeling complexes, which form ordered nucleosome arrays on chromatin and slide edge- and center-positioned histone octamers away from their original location on the DNA template to facilitate access to DNA during DNA-templated processes such as DNA replication, transcription, and repair. Both complexes regulate the spacing of nucleosomes along the chromatin and have the ability to slide mononucleosomes to the center of a DNA template in an ATP-dependent manner. The ACF-1 ISWI chromatin remodeling complex has a lower ATP hydrolysis rate than the ACF-5 ISWI chromatin remodeling complex. Has a role in sensing the length of DNA which flank nucleosomes, which modulates the nucleosome spacing activity of the ACF-5 ISWI chromatin remodeling complex. Involved in DNA replication and together with SMARCA5/SNF2H is required for replication of pericentric heterochromatin in S-phase. May have a role in nuclear receptor-mediated transcription repression. The protein is Bromodomain adjacent to zinc finger domain protein 1A (Baz1a) of Mus musculus (Mouse).